We begin with the raw amino-acid sequence, 806 residues long: Volume-regulated anion channel subunit LRRC8E (806 aa).

Over 1 to 22 (MIPVAEFKQFTEQQPAFKVLKP) the chain is Cytoplasmic. Residues 23 to 43 (WWDVLAEYITYAMLMIGVFGC) traverse the membrane as a helical segment. At 44 to 130 (TLQVTQDKII…YETALHWYAK (87 aa)) the chain is on the extracellular side. An intrachain disulfide couples cysteine 54 to cysteine 311. N-linked (GlcNAc...) asparagine glycosylation is found at asparagine 57 and asparagine 80. A disordered region spans residues 75-104 (QSSASNDSDLETTVPPPTATSSPPREMSGL). A helical membrane pass occupies residues 131 to 151 (YFPYLVVIHTLIFIICGNFWF). Residues 152–275 (KFPGTSSKIE…MRQTVLKVCK (124 aa)) lie on the Cytoplasmic side of the membrane. The interval 182-217 (EVSGESSQEKPNQERSIDRELSKPNFEEGSPATADL) is disordered. Residues 188-207 (SQEKPNQERSIDRELSKPNF) are compositionally biased toward basic and acidic residues. The helical transmembrane segment at 276-296 (FVLITIYNAVLVGKIHFIVPC) threads the bilayer. The Extracellular segment spans residues 297-323 (SVHTEDMTGYNSFCCNHTKAHLFSKLA). Asparagine 312 carries an N-linked (GlcNAc...) asparagine glycan. A helical membrane pass occupies residues 324–344 (ISYLCFLGVYGLTCFYTLYWL). The Cytoplasmic portion of the chain corresponds to 345 to 806 (FRRPLKEYSF…VDVRDKFKED (462 aa)). LRR repeat units follow at residues 569–589 (HLQK…NALK), 593–614 (LVKE…VFSL), 616–637 (NLQV…ISLQ), 641–662 (KLSV…IRKL), 664–685 (GLEE…LFLC), 687–708 (KLRH…IGVL), 710–731 (LLQY…LFFC), 733–754 (KLKT…VGSL), and 756–777 (CLVK…IGNC).

The protein belongs to the LRRC8 family. In terms of assembly, heterohexamer; oligomerizes with other LRRC8 proteins (lrrc8a, lrrc8c, lrrc8d and/or lrrc8b) to form a heterohexamer. Detected in a channel complex that contains lrrc8a, lrrc8c and lrrc8e. In vivo, the subunit composition may depend primarily on expression levels, and heterooligomeric channels containing various proportions of the different LRRC8 proteins may coexist.

The protein localises to the cell membrane. It is found in the endoplasmic reticulum membrane. The protein resides in the lysosome membrane. The enzyme catalyses chloride(in) = chloride(out). It catalyses the reaction iodide(out) = iodide(in). The catalysed reaction is taurine(out) = taurine(in). It carries out the reaction 2',3'-cGAMP(out) = 2',3'-cGAMP(in). Its function is as follows. Non-essential component of the volume-regulated anion channel (VRAC, also named VSOAC channel), an anion channel required to maintain a constant cell volume in response to extracellular or intracellular osmotic changes. The VRAC channel conducts iodide better than chloride and can also conduct organic osmolytes like taurine. Mediates efflux of amino acids, such as aspartate, in response to osmotic stress. The VRAC channel also mediates transport of immunoreactive cyclic dinucleotide GMP-AMP (2'-3'-cGAMP), an immune messenger produced in response to DNA virus in the cytosol. Channel activity requires lrrc8a plus at least one other family member (lrrc8b, lrrc8c, lrrc8d or lrrc8e); channel characteristics depend on the precise subunit composition. Also plays a role in lysosome homeostasis by forming functional lysosomal VRAC channels in response to low cytoplasmic ionic strength condition: lysosomal VRAC channels are necessary for the formation of large lysosome-derived vacuoles, which store and then expel excess water to maintain cytosolic water homeostasis. The sequence is that of Volume-regulated anion channel subunit LRRC8E from Xenopus laevis (African clawed frog).